A 204-amino-acid chain; its full sequence is Elongation factor Ts (204 aa).

Residues 87-90 (TDFV) are involved in Mg(2+) ion dislocation from EF-Tu.

The protein belongs to the EF-Ts family.

It localises to the cytoplasm. Functionally, associates with the EF-Tu.GDP complex and induces the exchange of GDP to GTP. It remains bound to the aminoacyl-tRNA.EF-Tu.GTP complex up to the GTP hydrolysis stage on the ribosome. The polypeptide is Elongation factor Ts (Frankia casuarinae (strain DSM 45818 / CECT 9043 / HFP020203 / CcI3)).